The sequence spans 59 residues: Small EDRK-rich factor 2 (59 aa).

Composition is skewed to basic and acidic residues over residues 1–30 (MTRG…RDDG) and 50–59 (KANEKKEEPK). The segment at 1–59 (MTRGNQRELARQKNMKKQSDSVKGKRRDDGLSAAARKQRDSEIMQQKQKKANEKKEEPK) is disordered.

The protein belongs to the SERF family.

Functionally, positive regulator of amyloid protein aggregation and proteotoxicity. Induces conformational changes in amyloid proteins, such as HTT, driving them into compact formations preceding the formation of aggregates. This is Small EDRK-rich factor 2 (SERF2) from Plecturocebus moloch (Dusky titi monkey).